The primary structure comprises 110 residues: ATP-dependent Clp protease adapter protein ClpS (110 aa).

The protein belongs to the ClpS family. In terms of assembly, binds to the N-terminal domain of the chaperone ClpA.

Involved in the modulation of the specificity of the ClpAP-mediated ATP-dependent protein degradation. The polypeptide is ATP-dependent Clp protease adapter protein ClpS (Bartonella quintana (strain Toulouse) (Rochalimaea quintana)).